A 380-amino-acid chain; its full sequence is Flap endonuclease 1 (380 aa).

The N-domain stretch occupies residues Met-1–His-105. Asp-34 is a Mg(2+) binding site. Arg-47 and Arg-71 together coordinate DNA. Positions 87, 159, 161, 180, and 182 each coordinate Mg(2+). The interval Met-123–Tyr-254 is I-domain. Residue Glu-159 participates in DNA binding. DNA-binding residues include Gly-232 and Asp-234. A Mg(2+)-binding site is contributed by Asp-234. Residues Pro-337–Phe-345 form an interaction with PCNA region. The tract at residues Arg-340 to Arg-380 is disordered. Low complexity predominate over residues Asp-342 to Lys-353. Ser-350 and Ser-351 each carry phosphoserine. A compositionally biased stretch (basic and acidic residues) spans Ser-370–Arg-380.

The protein belongs to the XPG/RAD2 endonuclease family. FEN1 subfamily. As to quaternary structure, interacts with PCNA. Three molecules of rad2 bind to one PCNA trimer with each molecule binding to one PCNA monomer. PCNA stimulates the nuclease activity without altering cleavage specificity. It depends on Mg(2+) as a cofactor. In terms of processing, phosphorylated. Phosphorylation upon DNA damage induces relocalization to the nuclear plasma.

It is found in the nucleus. The protein localises to the nucleolus. The protein resides in the nucleoplasm. It localises to the mitochondrion. Functionally, structure-specific nuclease with 5'-flap endonuclease and 5'-3' exonuclease activities involved in DNA replication and repair. During DNA replication, cleaves the 5'-overhanging flap structure that is generated by displacement synthesis when DNA polymerase encounters the 5'-end of a downstream Okazaki fragment. It enters the flap from the 5'-end and then tracks to cleave the flap base, leaving a nick for ligation. Also involved in the long patch base excision repair (LP-BER) pathway, by cleaving within the apurinic/apyrimidinic (AP) site-terminated flap. Acts as a genome stabilization factor that prevents flaps from equilibrating into structures that lead to duplications and deletions. Also possesses 5'-3' exonuclease activity on nicked or gapped double-stranded DNA, and exhibits RNase H activity. Also involved in replication and repair of rDNA and in repairing mitochondrial DNA. In Schizosaccharomyces pombe (strain 972 / ATCC 24843) (Fission yeast), this protein is Flap endonuclease 1.